A 269-amino-acid chain; its full sequence is Expansin-A32 (269 aa).

The signal sequence occupies residues 1–25 (MWCTWALGRVVLAVVFLVALAAGDA). The region spanning 60–174 (DGACGYKDTS…RRVPCVKVGG (115 aa)) is the Expansin-like EG45 domain. An Expansin-like CBD domain is found at 184 to 264 (YFNLVMVSNV…DWQFGVTYQA (81 aa)).

It belongs to the expansin family. Expansin A subfamily.

It localises to the secreted. It is found in the cell wall. Its subcellular location is the membrane. In terms of biological role, may cause loosening and extension of plant cell walls by disrupting non-covalent bonding between cellulose microfibrils and matrix glucans. No enzymatic activity has been found. May be required for rapid internodal elongation in deepwater rice during submergence. This chain is Expansin-A32 (EXPA32), found in Oryza sativa subsp. japonica (Rice).